The following is a 241-amino-acid chain: Leucyl/phenylalanyl-tRNA--protein transferase (241 aa).

This sequence belongs to the L/F-transferase family.

The protein localises to the cytoplasm. It catalyses the reaction N-terminal L-lysyl-[protein] + L-leucyl-tRNA(Leu) = N-terminal L-leucyl-L-lysyl-[protein] + tRNA(Leu) + H(+). The catalysed reaction is N-terminal L-arginyl-[protein] + L-leucyl-tRNA(Leu) = N-terminal L-leucyl-L-arginyl-[protein] + tRNA(Leu) + H(+). The enzyme catalyses L-phenylalanyl-tRNA(Phe) + an N-terminal L-alpha-aminoacyl-[protein] = an N-terminal L-phenylalanyl-L-alpha-aminoacyl-[protein] + tRNA(Phe). In terms of biological role, functions in the N-end rule pathway of protein degradation where it conjugates Leu, Phe and, less efficiently, Met from aminoacyl-tRNAs to the N-termini of proteins containing an N-terminal arginine or lysine. In Neisseria meningitidis serogroup C / serotype 2a (strain ATCC 700532 / DSM 15464 / FAM18), this protein is Leucyl/phenylalanyl-tRNA--protein transferase.